The sequence spans 78 residues: Large ribosomal subunit protein bL28 (78 aa).

Belongs to the bacterial ribosomal protein bL28 family.

This Treponema pallidum (strain Nichols) protein is Large ribosomal subunit protein bL28 (rpmB).